The chain runs to 226 residues: Transmembrane protein 204 (226 aa).

Residues 1-5 (MTVRK) lie on the Cytoplasmic side of the membrane. The chain crosses the membrane as a helical span at residues 6–26 (VVATAVLVALVSLVLNNAAAF). The Extracellular segment spans residues 27–103 (TPNWVYQTLE…LQFDMMRACN (77 aa)). A helical transmembrane segment spans residues 104–124 (LVATAALAAGQLTFVLGLTGL). Topologically, residues 125–136 (PLLSPDAQCWEE) are cytoplasmic. A helical membrane pass occupies residues 137–157 (AMAAAFQLASFVLVIGLVTFY). The Extracellular segment spans residues 158–170 (RIGPYTSLSWSCY). Residues 171-191 (LNIGACLLATLAAAMLIWNVL) form a helical membrane-spanning segment. Over 192 to 226 (HRREDCTAPRVIVISRSLTARFRRGLDNDYVESPC) the chain is Cytoplasmic.

Its subcellular location is the cell junction. The protein localises to the adherens junction. It is found in the cell membrane. In terms of biological role, can influence paracellular permeability. Appears to be involved in cell-cell interactions through adherens. This is Transmembrane protein 204 (TMEM204) from Bos taurus (Bovine).